The sequence spans 44 residues: Large ribosomal subunit protein bL36 (44 aa).

The protein belongs to the bacterial ribosomal protein bL36 family.

The protein is Large ribosomal subunit protein bL36 of Pseudoalteromonas translucida (strain TAC 125).